Reading from the N-terminus, the 567-residue chain is Dihydroxy-acid dehydratase (567 aa).

C52 lines the [2Fe-2S] cluster pocket. D84 provides a ligand contact to Mg(2+). C125 provides a ligand contact to [2Fe-2S] cluster. Mg(2+) is bound by residues D126 and K127. K127 is modified (N6-carboxylysine). C197 is a [2Fe-2S] cluster binding site. E448 provides a ligand contact to Mg(2+). The Proton acceptor role is filled by S474.

Belongs to the IlvD/Edd family. As to quaternary structure, homodimer. The cofactor is [2Fe-2S] cluster. Requires Mg(2+) as cofactor.

It carries out the reaction (2R)-2,3-dihydroxy-3-methylbutanoate = 3-methyl-2-oxobutanoate + H2O. It catalyses the reaction (2R,3R)-2,3-dihydroxy-3-methylpentanoate = (S)-3-methyl-2-oxopentanoate + H2O. It functions in the pathway amino-acid biosynthesis; L-isoleucine biosynthesis; L-isoleucine from 2-oxobutanoate: step 3/4. The protein operates within amino-acid biosynthesis; L-valine biosynthesis; L-valine from pyruvate: step 3/4. Functions in the biosynthesis of branched-chain amino acids. Catalyzes the dehydration of (2R,3R)-2,3-dihydroxy-3-methylpentanoate (2,3-dihydroxy-3-methylvalerate) into 2-oxo-3-methylpentanoate (2-oxo-3-methylvalerate) and of (2R)-2,3-dihydroxy-3-methylbutanoate (2,3-dihydroxyisovalerate) into 2-oxo-3-methylbutanoate (2-oxoisovalerate), the penultimate precursor to L-isoleucine and L-valine, respectively. This chain is Dihydroxy-acid dehydratase, found in Streptococcus pneumoniae serotype 2 (strain D39 / NCTC 7466).